A 283-amino-acid chain; its full sequence is Elongation factor Ts (283 aa).

Residues 79–82 (TDFV) form an involved in Mg(2+) ion dislocation from EF-Tu region.

The protein belongs to the EF-Ts family.

Its subcellular location is the cytoplasm. In terms of biological role, associates with the EF-Tu.GDP complex and induces the exchange of GDP to GTP. It remains bound to the aminoacyl-tRNA.EF-Tu.GTP complex up to the GTP hydrolysis stage on the ribosome. This is Elongation factor Ts from Shewanella putrefaciens (strain CN-32 / ATCC BAA-453).